A 1466-amino-acid chain; its full sequence is MEPAKPSGNNMGSNDERMQDYRPDPMMEESIQQILEDSLMCDTSFDDLILPGLESFGLIIPESSNNIESNNVEEGSNEDLKTLAEHKCKQGNDNDVIQSAMKLSGLYCDADITHTQPLSDNTHQDPIYSQETRIFSKTIQDPRIAAQTHRQCTSSASNLPSNESGSTQVRFASELPNQLLQPMYTSHNQNANLQNNFTSLPYQPYHDPYRDIESSYRESRNTNRGYDYNFRHHSYRPRGGNGKYNYYNPNSKYQQPYKRCFTRTYNRRGRGHRSYDCSDRSADLPYEHYTYPNYEQQNPDPRMNNYKDFTQLTNKFNFGANDYSMAFSTDSTHVQSDNYNHPTKAQTIPETTKTKKHKATKDNETSRGNQVLTSNDAISLSYRPSPIKLDIIKKIYDTDVIPLPKEALTANGSNRDVDIQKYKKAHIRCRSVQKKKERSSQTNKHDENHASSRSDLKERKSNEHEDKAVTKARDFSKLDPLLSPLPLTPEPAIDFADHTDKFYSTPEFNQIKQNLHRSKTSLQDTVPISKHTPRAPTKDNSYKKHHDSKDNYPKMKHSPGRTTSKKNTTNSNGHQNFKDVSVKNVSGKATSTSPKSKTHHYSSSSDEEGQYKSPVKTITPSPSPYCKLKNPSIMDKNSAKNHTASADKNLTDNSPIRSNLNPTAFNKSNNNKSITNSTSNSDECTDKKPNCNSTKNESKDPNRTCGKNSDKHLSKSCTMASKRAPSRASSRTSSRASSRASSRASSRASSRASSRASSRDSSRASSRAPSRASSRDSSRASSRDSSRDSNRASSKASSRASSRDSSRASSRDSSRASSKASRKASSRASSRASSRASSKASGKASSKASSRASSRAFSRNSSRASSRASSRASSRASSRASSRASSRDSSRALSRAFGRDSSRASSRASSRDSSRASSKASRKASSRASSRASSRASSRASSRELRQIYCDSNKRQTPPHDTSINTKFEISEIKFRCGEDLNFYKNTAARLQCFNHNDQFYNPRFRPHIRTNRKKSESTNDTDSESSMSRCKSHCRNSPDSLTIVRRKKHKSGSSSISSSIEENCRSNSHIVTGKEKFTPFYYQSSRTRSSSSSSSSSSASLSCSKSTLKTCRKTQNRDNKQIKSKSDSKHKTTNMSSDYESNRHADVFRNSPEAGEKFPLHNSSPFNTHEQSNHSENAIDEEQKKAPNITTSHLHQKQNVKLHNTKKCKKKRPRDDDSDSSIKNFCKKRISGAQKTESEVSEIDDLCYRDYVRLKERKVSEKFKIHRGRVATKDFQKLFRNTMRAFEYKQIPKKPCNDKNLKEAVYNICCNGLSNNAAIIMYFTRSKKVAQNIKIMQKELMIRPNITVSEAFKMNHAPPKYYDKDEIKRFIQLQKQGPQELWDKFENNTTHDLFTRHSDVKTMIIYAATPIDFVGAVKTCNKYAKDNPKEIVLRVCSIIDGDNPISIYNPISKDFKSKFSTLSKC.

8 disordered regions span residues 1–21 (MEPA…MQDY), 223–242 (NRGY…GGNG), 339–370 (YNHP…RGNQ), 428–472 (RCRS…VTKA), 517–965 (RSKT…TSIN), 1005–1068 (FRPH…CRSN), 1086–1179 (SRTR…SENA), and 1191–1223 (TTSH…DSSI). The segment covering 339 to 350 (YNHPTKAQTIPE) has biased composition (polar residues). The segment covering 428–437 (RCRSVQKKKE) has biased composition (basic residues). Composition is skewed to basic and acidic residues over residues 443 to 472 (NKHD…VTKA) and 536 to 553 (PTKD…DNYP). 2 stretches are compositionally biased toward polar residues: residues 583-595 (KNVS…TSPK) and 640-665 (KNHT…PTAF). The segment covering 666 to 681 (NKSNNNKSITNSTSNS) has biased composition (low complexity). Positions 696–713 (NESKDPNRTCGKNSDKHL) are enriched in basic and acidic residues. 2 stretches are compositionally biased toward low complexity: residues 720-756 (ASKR…SSRA) and 763-772 (RASSRAPSRA). Residues 773–790 (SSRDSSRASSRDSSRDSN) show a composition bias toward basic and acidic residues. Low complexity predominate over residues 791–800 (RASSKASSRA). Residues 801–814 (SSRDSSRASSRDSS) show a composition bias toward basic and acidic residues. 2 stretches are compositionally biased toward low complexity: residues 826-884 (SRAS…SSRA) and 926-940 (SRAS…SSRA). The segment covering 955–965 (RQTPPHDTSIN) has biased composition (polar residues). The interaction with human UBE2I stretch occupies residues 989–1037 (ARLQCFNHNDQFYNPRFRPHIRTNRKKSESTNDTDSESSMSRCKSHCRN). Composition is skewed to low complexity over residues 1019–1029 (TNDTDSESSMS), 1053–1068 (GSSS…CRSN), and 1086–1110 (SRTR…STLK). The segment covering 1116–1131 (QNRDNKQIKSKSDSKH) has biased composition (basic and acidic residues). Residues 1162 to 1177 (HNSSPFNTHEQSNHSE) show a composition bias toward polar residues. Basic residues predominate over residues 1195–1213 (LHQKQNVKLHNTKKCKKKR).

This sequence belongs to the herpesviridae IE2 family. In terms of assembly, interacts with human UBE2I in the nucleus. Although this interaction does not promote IE2 sumoylation, it represses transactivation activity.

It localises to the host nucleus. Its function is as follows. Transcriptional transactivator. The protein is Immediate-early protein 2 (U90/U86) of Homo sapiens (Human).